The sequence spans 377 residues: Probable purine permease 22 (377 aa).

The next 10 membrane-spanning stretches (helical) occupy residues 39 to 59 (WLRV…ATVL), 71 to 91 (TYVV…FRFF), 107 to 127 (SPSF…VSAY), 128 to 148 (AYLS…LILA), 166 to 186 (FTPL…LLVV), 202 to 222 (VIGF…LSLI), 238 to 258 (VLDL…IGLF), 283 to 303 (TLAS…GLIF), 309 to 329 (FSNS…VIVF), and 338 to 358 (IFSI…HYLD).

This sequence belongs to the purine permeases (TC 2.A.7.14) family.

The protein resides in the membrane. The chain is Probable purine permease 22 (PUP22) from Arabidopsis thaliana (Mouse-ear cress).